Reading from the N-terminus, the 309-residue chain is Homoserine O-succinyltransferase (309 aa).

The Acyl-thioester intermediate role is filled by Cys142. Residues Lys163 and Ser192 each coordinate substrate. His235 (proton acceptor) is an active-site residue. The active site involves Glu237. Arg249 serves as a coordination point for substrate.

Belongs to the MetA family. Homodimer.

It localises to the cytoplasm. The enzyme catalyses L-homoserine + succinyl-CoA = O-succinyl-L-homoserine + CoA. Its pathway is amino-acid biosynthesis; L-methionine biosynthesis via de novo pathway; O-succinyl-L-homoserine from L-homoserine: step 1/1. In terms of biological role, transfers a succinyl group from succinyl-CoA to L-homoserine, forming succinyl-L-homoserine. This is Homoserine O-succinyltransferase from Escherichia coli (strain ATCC 8739 / DSM 1576 / NBRC 3972 / NCIMB 8545 / WDCM 00012 / Crooks).